The chain runs to 104 residues: Large ribosomal subunit protein bL21 (104 aa).

The protein belongs to the bacterial ribosomal protein bL21 family. As to quaternary structure, part of the 50S ribosomal subunit. Contacts protein L20.

Its function is as follows. This protein binds to 23S rRNA in the presence of protein L20. The polypeptide is Large ribosomal subunit protein bL21 (Francisella tularensis subsp. tularensis (strain FSC 198)).